A 184-amino-acid chain; its full sequence is Large ribosomal subunit protein uL5 (184 aa).

This sequence belongs to the universal ribosomal protein uL5 family. In terms of assembly, part of the 50S ribosomal subunit; part of the 5S rRNA/L5/L18/L25 subcomplex. Contacts the 5S rRNA and the P site tRNA. Forms a bridge to the 30S subunit in the 70S ribosome.

Its function is as follows. This is one of the proteins that bind and probably mediate the attachment of the 5S RNA into the large ribosomal subunit, where it forms part of the central protuberance. In the 70S ribosome it contacts protein S13 of the 30S subunit (bridge B1b), connecting the 2 subunits; this bridge is implicated in subunit movement. Contacts the P site tRNA; the 5S rRNA and some of its associated proteins might help stabilize positioning of ribosome-bound tRNAs. The chain is Large ribosomal subunit protein uL5 from Agrobacterium fabrum (strain C58 / ATCC 33970) (Agrobacterium tumefaciens (strain C58)).